Here is a 169-residue protein sequence, read N- to C-terminus: Ribosome maturation factor RimM (169 aa).

Positions 97 to 169 (EDEYYWTDLV…IITADWGLDY (73 aa)) constitute a PRC barrel domain.

The protein belongs to the RimM family. Binds ribosomal protein uS19.

The protein resides in the cytoplasm. An accessory protein needed during the final step in the assembly of 30S ribosomal subunit, possibly for assembly of the head region. Essential for efficient processing of 16S rRNA. May be needed both before and after RbfA during the maturation of 16S rRNA. It has affinity for free ribosomal 30S subunits but not for 70S ribosomes. The sequence is that of Ribosome maturation factor RimM from Neisseria meningitidis serogroup C / serotype 2a (strain ATCC 700532 / DSM 15464 / FAM18).